We begin with the raw amino-acid sequence, 637 residues long: MIYHFTEEYDIIVIGAGHAGVEASLAASRMGCKVLLATINIEMLAFMPCNPSIGGSAKGIVVREVDALGGEMAKTIDKTYIQMKMLNTGKGPAVRALRAQADKELYSKEMRKTVENQENLTLRQTMIDEILVEDGKVVGVRTATHQEYAAKAVIVTTGTALRGEIIIGDLKYSSGPNHSLASINLADNLKELGLEIGRFKTGTPPRVKASSINYDVTEIQPGDEAPNHFSYTSRDEDYVKDQVPCWLTYTNGTSHEIIQNNLHRAPMFTGVVKGVGPRYCPSIEDKIVRFADKERHQLFLEPEGRNTEEVYVQGLSTSLPEDVQRDLVHSIKGLENAEMMRTGYAIEYDMVLPHQLRATLETKKISGLFTAGQTNGTSGYEEAAGQGIIAGINAALKIQGKPELILKRSDGYIGVMIDDLVTKGTIEPYRLLTSRAEYRLILRHDNADMRLTEMGREIGLVDDERWTRFEIKKNQFDNEMKRLDSIKLKPVKETNAKVEEMGFKPLTDAVTAKEFLRRPEVSYQDVVAFIGPAAEDLDDKIIELIETEIKYEGYISKAMDQVAKMKRMEEKRIPANIDWDDIDSIATEARQKFKLINPETIGQASRISGVNPADISILMVYLEGKNRSISKTLQKSK.

FAD is bound by residues 15–20, Ile127, and Ser182; that span reads GAGHAG. Position 276–290 (276–290) interacts with NAD(+); sequence GPRYCPSIEDKIVRF. Residue Gln373 coordinates FAD.

It belongs to the MnmG family. In terms of assembly, homodimer. Heterotetramer of two MnmE and two MnmG subunits. It depends on FAD as a cofactor.

It is found in the cytoplasm. Functionally, NAD-binding protein involved in the addition of a carboxymethylaminomethyl (cmnm) group at the wobble position (U34) of certain tRNAs, forming tRNA-cmnm(5)s(2)U34. The sequence is that of tRNA uridine 5-carboxymethylaminomethyl modification enzyme MnmG from Streptococcus pneumoniae (strain Hungary19A-6).